Here is a 120-residue protein sequence, read N- to C-terminus: Cytochrome c-550 (120 aa).

A helical membrane pass occupies residues 5 to 25; the sequence is PLIPFLLIAVLGIGLTFFLSV. Over 26–120 the chain is Periplasmic; the sequence is KGLDDSREIA…DMAEWVSKIK (95 aa). Residues C60, C63, H64, and M99 each contribute to the heme c site.

In terms of processing, binds 1 heme c group covalently per subunit.

The protein resides in the cell membrane. Functionally, not essential for growth on minimal or rich media. The polypeptide is Cytochrome c-550 (cccA) (Bacillus subtilis (strain 168)).